A 630-amino-acid polypeptide reads, in one-letter code: Scarecrow-like protein 34 (630 aa).

One can recognise a GRAS domain in the interval 240-628 (KKKKSQVVDF…RTLYASSCWV (389 aa)). The leucine repeat I (LRI) stretch occupies residues 247–312 (VDFRTLLTHC…GSTGPMIQTY (66 aa)). Positions 331–396 (YRVYLSSSPF…DVPRKLRITG (66 aa)) are VHIID. A VHIID motif is present at residues 362-366 (LHIVD). A leucine repeat II (LRII) region spans residues 412–444 (ETGRRLAEYCKRFNVPFEYKAIASQNWETIRIE). Residues 454 to 549 (LAVNAGLRLK…REFYGREAMN (96 aa)) are PFYRE. The segment at 552-628 (ACEEADRVER…RTLYASSCWV (77 aa)) is SAW.

Belongs to the GRAS family.

The protein resides in the nucleus. Probable transcription factor involved in plant development. The protein is Scarecrow-like protein 34 (SCL34) of Arabidopsis thaliana (Mouse-ear cress).